Consider the following 24-residue polypeptide: N-acyl-L-amino acid amidohydrolase (24 aa).

It belongs to the peptidase M20 family. As to quaternary structure, homotetramer. It depends on Co(2+) as a cofactor.

It carries out the reaction an N-acyl-L-amino acid + H2O = an L-alpha-amino acid + a carboxylate. It catalyses the reaction an N-acetyl-L-cysteine-S-conjugate + H2O = an S-substituted L-cysteine + acetate. This is N-acyl-L-amino acid amidohydrolase from Parageobacillus thermoglucosidasius (Geobacillus thermoglucosidasius).